Consider the following 23-residue polypeptide: Basic phospholipase A2 intermexin (23 aa).

This sequence belongs to the phospholipase A2 family. Group II subfamily. The cofactor is Ca(2+). Contains 7 disulfide bonds. In terms of tissue distribution, expressed by the venom gland.

The protein resides in the secreted. It catalyses the reaction a 1,2-diacyl-sn-glycero-3-phosphocholine + H2O = a 1-acyl-sn-glycero-3-phosphocholine + a fatty acid + H(+). Snake venom phospholipase A2 (PLA2) that shows presynaptic neurotoxicity and low myotoxicity. PLA2 catalyzes the calcium-dependent hydrolysis of the 2-acyl groups in 3-sn-phosphoglycerides. The chain is Basic phospholipase A2 intermexin from Gloydius intermedius (Central Asian pit viper).